The sequence spans 240 residues: Peptidyl-tRNA hydrolase (240 aa).

Residue tyrosine 14 participates in tRNA binding. The active-site Proton acceptor is the histidine 19. TRNA-binding residues include tyrosine 64, asparagine 66, and asparagine 112. A compositionally biased stretch (basic and acidic residues) spans 190 to 204; that stretch reads KADEEKPRKDSEKKP. The tract at residues 190 to 240 is disordered; the sequence is KADEEKPRKDSEKKPAGQSHIRQARNNNQPKLPATGPMADMLKKMFGNKGE. The segment covering 209 to 219 has biased composition (polar residues); sequence HIRQARNNNQP.

The protein belongs to the PTH family. In terms of assembly, monomer.

It is found in the cytoplasm. It carries out the reaction an N-acyl-L-alpha-aminoacyl-tRNA + H2O = an N-acyl-L-amino acid + a tRNA + H(+). In terms of biological role, hydrolyzes ribosome-free peptidyl-tRNAs (with 1 or more amino acids incorporated), which drop off the ribosome during protein synthesis, or as a result of ribosome stalling. Its function is as follows. Catalyzes the release of premature peptidyl moieties from peptidyl-tRNA molecules trapped in stalled 50S ribosomal subunits, and thus maintains levels of free tRNAs and 50S ribosomes. The sequence is that of Peptidyl-tRNA hydrolase from Rhizobium etli (strain ATCC 51251 / DSM 11541 / JCM 21823 / NBRC 15573 / CFN 42).